We begin with the raw amino-acid sequence, 71 residues long: Small ribosomal subunit protein bS21 (71 aa).

The span at 48 to 60 (KKAAAVKRYKKKL) shows a compositional bias: basic residues. The interval 48 to 71 (KKAAAVKRYKKKLQRESIRTTRMY) is disordered. The segment covering 61-71 (QRESIRTTRMY) has biased composition (basic and acidic residues).

It belongs to the bacterial ribosomal protein bS21 family.

In Psychrobacter sp. (strain PRwf-1), this protein is Small ribosomal subunit protein bS21.